Reading from the N-terminus, the 80-residue chain is MSCCGGNCGCGAGCKCSGGCGGCKMYPELSYTENTAAETLILGVAPPKTTYLEGAGEEAAAENGGCKCGPDCKCNPCNCK.

Belongs to the metallothionein superfamily. Type 15 family.

Metallothioneins have a high content of cysteine residues that bind various heavy metals. This is Metallothionein-like protein 1 (METAL1) from Coffea arabica (Arabian coffee).